A 72-amino-acid chain; its full sequence is Translation initiation factor IF-1 (72 aa).

The S1-like domain occupies 1 to 72 (MSKQSSIEQD…TKGRIVFRYK (72 aa)).

Belongs to the IF-1 family. Component of the 30S ribosomal translation pre-initiation complex which assembles on the 30S ribosome in the order IF-2 and IF-3, IF-1 and N-formylmethionyl-tRNA(fMet); mRNA recruitment can occur at any time during PIC assembly.

It localises to the cytoplasm. Its function is as follows. One of the essential components for the initiation of protein synthesis. Stabilizes the binding of IF-2 and IF-3 on the 30S subunit to which N-formylmethionyl-tRNA(fMet) subsequently binds. Helps modulate mRNA selection, yielding the 30S pre-initiation complex (PIC). Upon addition of the 50S ribosomal subunit IF-1, IF-2 and IF-3 are released leaving the mature 70S translation initiation complex. This Cytophaga hutchinsonii (strain ATCC 33406 / DSM 1761 / CIP 103989 / NBRC 15051 / NCIMB 9469 / D465) protein is Translation initiation factor IF-1.